The primary structure comprises 413 residues: 2,3-bisphosphoglycerate-independent phosphoglycerate mutase (413 aa).

Belongs to the BPG-independent phosphoglycerate mutase family. A-PGAM subfamily.

The enzyme catalyses (2R)-2-phosphoglycerate = (2R)-3-phosphoglycerate. The protein operates within carbohydrate degradation; glycolysis; pyruvate from D-glyceraldehyde 3-phosphate: step 3/5. In terms of biological role, catalyzes the interconversion of 2-phosphoglycerate and 3-phosphoglycerate. The sequence is that of 2,3-bisphosphoglycerate-independent phosphoglycerate mutase from Sulfurisphaera tokodaii (strain DSM 16993 / JCM 10545 / NBRC 100140 / 7) (Sulfolobus tokodaii).